We begin with the raw amino-acid sequence, 100 residues long: Small ribosomal subunit protein uS14m (100 aa).

It belongs to the universal ribosomal protein uS14 family.

The protein localises to the mitochondrion. The protein is Small ribosomal subunit protein uS14m (RPS14) of Vicia faba (Broad bean).